A 109-amino-acid chain; its full sequence is UPF0060 membrane protein RHA1_ro06609 (109 aa).

A run of 4 helical transmembrane segments spans residues 7–27, 33–53, 62–82, and 88–108; these read VALF…VWQG, GWIW…VATL, ILAA…MVAD, and RWDV…MYAP.

It belongs to the UPF0060 family.

Its subcellular location is the cell membrane. The chain is UPF0060 membrane protein RHA1_ro06609 from Rhodococcus jostii (strain RHA1).